The following is a 109-amino-acid chain: Spermidine export protein MdtI (109 aa).

Transmembrane regions (helical) follow at residues 6 to 26 (WVHA…NVFL), 36 to 56 (FYGI…SQAV), 64 to 84 (AYAL…WVLF), and 88 to 108 (LNNK…MIKL).

The protein belongs to the drug/metabolite transporter (DMT) superfamily. Small multidrug resistance (SMR) (TC 2.A.7.1) family. MdtI subfamily. Forms a complex with MdtJ.

It is found in the cell inner membrane. Catalyzes the excretion of spermidine. This Citrobacter koseri (strain ATCC BAA-895 / CDC 4225-83 / SGSC4696) protein is Spermidine export protein MdtI.